Here is a 311-residue protein sequence, read N- to C-terminus: Tyrosine recombinase XerC (311 aa).

The Core-binding (CB) domain maps to 14–100; it reads ESLNETAKKF…SLRTFYKVLL (87 aa). The region spanning 121–303 is the Tyr recombinase domain; that stretch reads EVPKNFRINE…SKEKIKEVYR (183 aa). Active-site residues include Arg163, Lys187, His255, Arg258, and His281. Residue Tyr290 is the O-(3'-phospho-DNA)-tyrosine intermediate of the active site.

Belongs to the 'phage' integrase family. XerC subfamily. In terms of assembly, forms a cyclic heterotetrameric complex composed of two molecules of XerC and two molecules of XerD.

The protein localises to the cytoplasm. Site-specific tyrosine recombinase, which acts by catalyzing the cutting and rejoining of the recombining DNA molecules. The XerC-XerD complex is essential to convert dimers of the bacterial chromosome into monomers to permit their segregation at cell division. It also contributes to the segregational stability of plasmids. In Leptospira interrogans serogroup Icterohaemorrhagiae serovar copenhageni (strain Fiocruz L1-130), this protein is Tyrosine recombinase XerC.